A 751-amino-acid chain; its full sequence is Phosphate transporter PHO1 homolog 8 (751 aa).

The SPX domain maps to 1-299 (MKFGKEYVAQ…LRNAAKLYME (299 aa)). The Cytoplasmic portion of the chain corresponds to 1-351 (MKFGKEYVAQ…KVTKEKHRIT (351 aa)). The helical transmembrane segment at 352–372 (FSTGFFVGCTVSLVIALGLFI) threads the bilayer. The Extracellular portion of the chain corresponds to 373-392 (HARNIMGAVGHKLYMETMFP). A helical transmembrane segment spans residues 393-413 (LYSLFAFVVLHMIMYASNIYF). Residues 414–434 (WKRYRVNYPFIFGFKEGTELG) are Cytoplasmic-facing. A helical membrane pass occupies residues 435–455 (YGHVLLLSFGLGTLALCAVLV). Over 456-473 (NMDMEMDPNTNDYKTITE) the chain is Extracellular. The helical transmembrane segment at 474 to 494 (LVPLFVVALVIAISVCPFNIF) threads the bilayer. Topologically, residues 495–623 (YRSSRFFFLM…FSINRGNDWK (129 aa)) are cytoplasmic. The EXS domain maps to 558–751 (KSSDVYSTFY…NYDEEEDRDS (194 aa)). A helical transmembrane segment spans residues 624-644 (IAAWVFSGLATFYGTYWDIVY). Over 645–667 (DWGLLHRPSKSWLREKLLVPHKS) the chain is Extracellular. A helical membrane pass occupies residues 668 to 688 (VYYVAMVVNVVLRLAWLQTVL). Topologically, residues 689-751 (DFNISFLHRE…NYDEEEDRDS (63 aa)) are cytoplasmic.

Belongs to the SYG1 (TC 2.A.94) family. In terms of tissue distribution, expressed in root epidermis, leaf hydathodes, trichomes and petioles, stem vascular cylinder, receptacle, stigma apex and pollen grains.

It localises to the cell membrane. Its function is as follows. May transport inorganic phosphate (Pi). This chain is Phosphate transporter PHO1 homolog 8 (PHO1-H8), found in Arabidopsis thaliana (Mouse-ear cress).